We begin with the raw amino-acid sequence, 662 residues long: Methionine--tRNA ligase (662 aa).

A 'HIGH' region motif is present at residues 13–23 (PYTNGPCHLGH). The Zn(2+) site is built by C144, C147, C156, and C160. A 'KMSKS' region motif is present at residues 326-330 (KFSKS). K329 provides a ligand contact to ATP. The 99-residue stretch at 564–662 (DFSKVEIKTG…KPVEPGTKIR (99 aa)) folds into the tRNA-binding domain.

The protein belongs to the class-I aminoacyl-tRNA synthetase family. MetG type 1 subfamily. As to quaternary structure, homodimer. The cofactor is Zn(2+).

The protein resides in the cytoplasm. It catalyses the reaction tRNA(Met) + L-methionine + ATP = L-methionyl-tRNA(Met) + AMP + diphosphate. In terms of biological role, is required not only for elongation of protein synthesis but also for the initiation of all mRNA translation through initiator tRNA(fMet) aminoacylation. The chain is Methionine--tRNA ligase from Methanoregula boonei (strain DSM 21154 / JCM 14090 / 6A8).